Consider the following 194-residue polypeptide: Peptidyl-tRNA hydrolase (194 aa).

Y17 contributes to the tRNA binding site. The Proton acceptor role is filled by H22. Residues F68, N70, and N116 each contribute to the tRNA site.

It belongs to the PTH family. Monomer.

Its subcellular location is the cytoplasm. The enzyme catalyses an N-acyl-L-alpha-aminoacyl-tRNA + H2O = an N-acyl-L-amino acid + a tRNA + H(+). Its function is as follows. Hydrolyzes ribosome-free peptidyl-tRNAs (with 1 or more amino acids incorporated), which drop off the ribosome during protein synthesis, or as a result of ribosome stalling. Catalyzes the release of premature peptidyl moieties from peptidyl-tRNA molecules trapped in stalled 50S ribosomal subunits, and thus maintains levels of free tRNAs and 50S ribosomes. The chain is Peptidyl-tRNA hydrolase from Pasteurella multocida (strain Pm70).